We begin with the raw amino-acid sequence, 57 residues long: SALTGAGGTHLCGSHLVEALYVVCGDRGFFYTPSKTGIVEQCCHRKCSIYDMENYCN.

3 disulfide bridges follow: Cys-12-Cys-43, Cys-24-Cys-56, and Cys-42-Cys-47.

This sequence belongs to the insulin family. Heterodimer of a B chain and an A chain linked by two disulfide bonds.

Its subcellular location is the secreted. In terms of biological role, insulin decreases blood glucose concentration. It increases cell permeability to monosaccharides, amino acids and fatty acids. It accelerates glycolysis, the pentose phosphate cycle, and glycogen synthesis in liver. The protein is Insulin (ins) of Lampetra fluviatilis (European river lamprey).